The chain runs to 183 residues: Apo-citrate lyase phosphoribosyl-dephospho-CoA transferase (183 aa).

It belongs to the CitX family.

The catalysed reaction is apo-[citrate lyase ACP] + 2'-(5''-triphospho-alpha-D-ribosyl)-3'-dephospho-CoA = holo-[citrate lyase ACP] + diphosphate. Functionally, transfers 2-(5''-triphosphoribosyl)-3'-dephosphocoenzyme-A on a serine residue to the apo-acyl carrier protein (gamma chain) of the citrate lyase to yield holo-acyl carrier protein. The polypeptide is Apo-citrate lyase phosphoribosyl-dephospho-CoA transferase (Escherichia coli O9:H4 (strain HS)).